A 59-amino-acid polypeptide reads, in one-letter code: Large ribosomal subunit protein bL32c (59 aa).

This sequence belongs to the bacterial ribosomal protein bL32 family.

It is found in the plastid. The protein localises to the chloroplast. This is Large ribosomal subunit protein bL32c from Physcomitrium patens (Spreading-leaved earth moss).